Reading from the N-terminus, the 612-residue chain is MPDYRSKTSTFGRNMAGARALWRATGMKDEDFKKPIIAVANSFTQFVPGHVHLKDLGQLVAREIEKAGGVAKEFDTIAVDDGIAMGHDGMLYSLPSREIIADSVEYMVNAHCADALVCISNCDKITPGMLMASLRLNIPVVFVSGGPMEAGKTKLSQHGLDLVDAMVIAADSSASDEKVEAYERSACPTCGSCSGMFTANSMNCLTEALGLSLPGNGTIVATHADRRELFLQAGRTIVDLCRRYYQEGDESVLPRAIASRAAFENAMTLDIAMGGSTNTILHLLAAAQEAEVDFDLHAIDALSRQVPQLCKVAPNTPKYHIEDVHRAGGIVAILGELARAGLLNTEVATVHSKTLGEAIEKWDVRVNRDQAVHTFFKAGPAGIPSQEAFSQSERWDSLDLDRAEGCIRDLEHAFSTEGGLAVLYGNIALDGCVVKTAGVDESILVFEGTAKIFESQDAAVKGILGDEVKPGDVVVIRYEGPKGGPGMQEMLYPTSYLKSKGLGKQCALLTDGRFSGGTSGLSIGHASPEAAAGGAIGLVEDGDKILIDIPNRSINLLVSDEELKARRLHQDHKGWKPAAPRARKVSTALKAYALLATSADKGAVRNKALLDE.

Asp81 lines the Mg(2+) pocket. Residue Cys122 coordinates [2Fe-2S] cluster. The Mg(2+) site is built by Asp123 and Lys124. Lys124 is subject to N6-carboxylysine. Cys193 is a binding site for [2Fe-2S] cluster. Residue Glu489 participates in Mg(2+) binding. Residue Ser515 is the Proton acceptor of the active site.

Belongs to the IlvD/Edd family. In terms of assembly, homodimer. Requires [2Fe-2S] cluster as cofactor. The cofactor is Mg(2+).

It carries out the reaction (2R)-2,3-dihydroxy-3-methylbutanoate = 3-methyl-2-oxobutanoate + H2O. The catalysed reaction is (2R,3R)-2,3-dihydroxy-3-methylpentanoate = (S)-3-methyl-2-oxopentanoate + H2O. It participates in amino-acid biosynthesis; L-isoleucine biosynthesis; L-isoleucine from 2-oxobutanoate: step 3/4. Its pathway is amino-acid biosynthesis; L-valine biosynthesis; L-valine from pyruvate: step 3/4. In terms of biological role, functions in the biosynthesis of branched-chain amino acids. Catalyzes the dehydration of (2R,3R)-2,3-dihydroxy-3-methylpentanoate (2,3-dihydroxy-3-methylvalerate) into 2-oxo-3-methylpentanoate (2-oxo-3-methylvalerate) and of (2R)-2,3-dihydroxy-3-methylbutanoate (2,3-dihydroxyisovalerate) into 2-oxo-3-methylbutanoate (2-oxoisovalerate), the penultimate precursor to L-isoleucine and L-valine, respectively. This Azotobacter vinelandii (strain DJ / ATCC BAA-1303) protein is Dihydroxy-acid dehydratase.